The following is a 141-amino-acid chain: Hemoglobin subunit alpha (141 aa).

Positions 1–141 constitute a Globin domain; it reads VLSPADKTNV…VSTVLTSKYR (141 aa). Phosphoserine is present on serine 3. The residue at position 7 (lysine 7) is an N6-succinyllysine. At threonine 8 the chain carries Phosphothreonine. Residue lysine 11 is modified to N6-succinyllysine. At serine 35 the chain carries Phosphoserine. Lysine 40 is modified (N6-succinyllysine). The residue at position 49 (serine 49) is a Phosphoserine. Histidine 58 contacts O2. Histidine 87 is a heme b binding site. At serine 102 the chain carries Phosphoserine. Threonine 108 carries the post-translational modification Phosphothreonine. A Phosphoserine modification is found at serine 124. Residues threonine 134 and threonine 137 each carry the phosphothreonine modification. A Phosphoserine modification is found at serine 138.

Belongs to the globin family. Heterotetramer of two alpha chains and two beta chains. In terms of tissue distribution, red blood cells.

Its function is as follows. Involved in oxygen transport from the lung to the various peripheral tissues. In terms of biological role, hemopressin acts as an antagonist peptide of the cannabinoid receptor CNR1. Hemopressin-binding efficiently blocks cannabinoid receptor CNR1 and subsequent signaling. The chain is Hemoglobin subunit alpha (HBA) from Eulemur fulvus fulvus (Brown lemur).